Consider the following 506-residue polypeptide: Serine/threonine-protein kinase D6PKL1 (506 aa).

The disordered stretch occupies residues 1 to 96 (MASKYGSGVL…TCSSFSGNNK (96 aa)). The span at 12-23 (ENKKEKGDKETP) shows a compositional bias: basic and acidic residues. Positions 24–54 (ETSYSSQSVSVNTLADQVSSTLSFAPSSDSK) are enriched in polar residues. Over residues 55-67 (TGGEVKFNEKSDQ) the composition is skewed to basic and acidic residues. The span at 77–92 (STSSDISDESTCSSFS) shows a compositional bias: low complexity. In terms of domain architecture, Protein kinase spans 123-456 (FRLLKRLGCG…ATEMKQHPFF (334 aa)). ATP contacts are provided by residues 129 to 137 (LGCGDIGTV) and lysine 152. The active-site Proton acceptor is the aspartate 248. Positions 475–495 (PVDYESAPATPAAATSTSVKS) are disordered. Residues 480–492 (SAPATPAAATSTS) show a composition bias toward low complexity.

Belongs to the protein kinase superfamily. AGC Ser/Thr protein kinase family.

The protein localises to the cell membrane. It carries out the reaction L-seryl-[protein] + ATP = O-phospho-L-seryl-[protein] + ADP + H(+). The enzyme catalyses L-threonyl-[protein] + ATP = O-phospho-L-threonyl-[protein] + ADP + H(+). Its function is as follows. Protein kinase that regulates the auxin transport activity of PIN auxin efflux facilitators by direct phosphorylation. D6PK-mediated PIN phosphorylation promotes auxin transport in the hypocotyl and this is a prerequisite for PHOT1-dependent hypocotyl bending. This Arabidopsis thaliana (Mouse-ear cress) protein is Serine/threonine-protein kinase D6PKL1 (D6PKL1).